The chain runs to 624 residues: Forkhead box protein O1 (624 aa).

2 disordered regions span residues 1 to 62 and 94 to 128; these read MAEA…PSAS and APLS…SRRN. Thr-24 carries the phosphothreonine; by PKB/AKT1 or PKB/AKT2 and SGK1 modification. Composition is skewed to low complexity over residues 37-62 and 105-119; these read SATS…PSAS and AAAA…AGQP. A DNA-binding region (fork-head) is located at residues 130–224; it reads WGNLSYADLI…KSGKSPRRRA (95 aa). 2 DNA-binding regions span residues 181–188 and 204–207; these read NSIRHNLS and SSWW. Phosphoserine; by STK4/MST1 is present on Ser-182. Phosphoserine is present on residues Ser-188, Ser-204, and Ser-205. Residues 204 to 306 form a disordered region; sequence SSWWMLNPEG…RLSPIMTEQD (103 aa). N6-acetyllysine is present on residues Lys-215 and Lys-218. A Phosphoserine; by CDK1 modification is found at Ser-219. 2 positions are modified to omega-N-methylarginine; by PRMT1: Arg-221 and Arg-223. The short motif at 221-223 is the Nuclear localization signal element; sequence RRR. The residue at position 226 (Ser-226) is a Phosphoserine; by PKB/AKT1 and SGK1. N6-acetyllysine is present on residues Lys-232, Lys-235, and Lys-244. The segment covering 234 to 245 has biased composition (basic residues); the sequence is AKSRGRAAKKKA. The tract at residues 253–532 is sufficient for interaction with NLK; that stretch reads GAGDSPGSQF…RLAPVKTALQ (280 aa). Phosphoserine occurs at positions 257 and 268. The segment covering 279-296 has biased composition (polar residues); it reads NWSTFRPRTSSNASTISG. A Phosphoserine; by PKB/AKT1 modification is found at Ser-289. At Ser-292 the chain carries Phosphoserine; by CK1 and SGK1. Position 295 is a phosphoserine; by CK1 (Ser-295). Residue Ser-299 is modified to Phosphoserine; by DYRK1A. Position 303 is a phosphothreonine (Thr-303). Positions 333–428 are required for interaction with RUNX2; it reads SEISNPENME…YGGMSQYCAP (96 aa). Lys-393 bears the N6-acetyllysine mark. The Required for interaction with SIRT1 motif lies at 431 to 435; it reads LKELL.

In terms of assembly, interacts with LRPPRC. Interacts with RUNX2; the interaction inhibits RUNX2 transcriptional activity and mediates the IGF1/insulin-dependent BGLAP expression in osteoblasts Interacts with PPP2R1A; the interaction regulates the dephosphorylation of FOXO1 at Thr-24 and Ser-263 leading to its nuclear import. Interacts with NLK. Interacts with SIRT1; the interaction results in the deacetylation of FOXO1 leading to activation of FOXO1-mediated transcription of genes involved in DNA repair and stress resistance. Binds to CDK1. Interacts with the 14-3-3 proteins, YWHAG and YWHAZ; the interactions require insulin-stimulated phosphorylation on Thr-24, promote nuclear exit and loss of transcriptional activity. Interacts with SKP2; the interaction ubiquitinates FOXO1 leading to its proteasomal degradation. The interaction requires the presence of KRIT1. Interacts (via the C-terminal half) with ATF4 (via its DNA binding domain); the interaction occurs in osteoblasts, regulates glucose homeostasis via suppression of beta-cell proliferation and subsequent decrease in insulin production. Interacts with PRMT1; the interaction methylates FOXO1, prevents PKB/AKT1 phosphorylation and retains FOXO1 in the nucleus. Interacts with EP300 and CREBBP; the interactions acetylate FOXO1. Interacts with SIRT2; the interaction is disrupted in response to oxidative stress or serum deprivation, leading to increased level of acetylated FOXO1, which promotes stress-induced autophagy by stimulating E1-like activating enzyme ATG7. Interacts (acetylated form) with ATG7; the interaction is increased in response to oxidative stress or serum deprivation and promotes the autophagic process leading to cell death. Interacts (acetylated form) with PPARG. Interacts with XBP1; this interaction is direct and leads to FOXO1 ubiquitination and degradation via the proteasome pathway. Interacts (via the Fork-head domain) with CEBPA; the interaction increases when FOXO1 is deacetylated. Interacts with WDFY2. Forms a complex with WDFY2 and AKT1. Interacts with CRY1. Interacts with PPIA/CYPA; the interaction promotes FOXO1 dephosphorylation, nuclear accumulation and transcriptional activity. Interacts with TOX4; FOXO1 is required for full induction of TOX4-dependent activity and the interaction is inhibited by insulin. Interacts (when phosphorylated on Ser-226) with STUB1/CHIP. Post-translationally, phosphorylation by NLK promotes nuclear export and inhibits the transcriptional activity. In response to growth factors, phosphorylation on Thr-24, Ser-226 and Ser-292 by PKB/AKT1 promotes nuclear export and inactivation of transactivational activity. Phosphorylation on Thr-24 is required for binding 14-3-3 proteins. Phosphorylation of Ser-226 decreases DNA-binding activity and promotes the phosphorylation of Thr-24 and Ser-289, permitting phosphorylation of Ser-292 and Ser-295, probably by CDK1, leading to nuclear exclusion and loss of function. Stress signals, such as response to oxygen or nitric oxide, attenuate the PKB/AKT1-mediated phosphorylation leading to nuclear retention. Phosphorylation of Ser-299 is independent of IGF1 and leads to reduced function. Dephosphorylated on Thr-24 and Ser-226 by PP2A in beta-cells under oxidative stress leading to nuclear retention. Phosphorylation of Ser-219 by CDK1 disrupts binding of 14-3-3 proteins leading to nuclear accumulation and has no effect on DNA binding nor transcriptional activity. Phosphorylation by STK4/MST1 on Ser-182, upon oxidative stress, inhibits binding to 14-3-3 proteins and nuclear export. PPIA/CYPA promotes its dephosphorylation on Ser-226. Ubiquitinated by SKP2. Ubiquitination leads to proteasomal degradation. Ubiquitinated by STUB1/CHIP; when Ser-226 is phosphorylated. In terms of processing, methylation inhibits AKT1-mediated phosphorylation at Ser-226 and is increased by oxidative stress. Post-translationally, acetylated. Acetylation at Lys-232 and Lys-244 are necessary for autophagic cell death induction. Deacetylated by SIRT2 in response to oxidative stress or serum deprivation, thereby negatively regulating FOXO1-mediated autophagic cell death. Once in the nucleus, acetylated by CREBBP/EP300. Acetylation diminishes the interaction with target DNA and attenuates the transcriptional activity. It increases the phosphorylation at Ser-226. Deacetylation by SIRT1 results in reactivation of the transcriptional activity. Oxidative stress by hydrogen peroxide treatment appears to promote deacetylation and uncoupling of insulin-induced phosphorylation. By contrast, resveratrol acts independently of acetylation. Acetylated at Lys-393, promoting its localization to the nucleus and transcription factor activity. Deacetylation at Lys-393 by SIRT6, promotes its translocation into the cytoplasm, preventing its transcription factor activity. Deacetylation and subsequent inhibition by SIRT6 has different effects depending on cell types: it inhibits gluconeogenesis in hepatocytes, promotes glucose sensing in pancreatic beta-cells and regulates lipid catabolism in brown adipocytes.

Its subcellular location is the cytoplasm. The protein resides in the nucleus. In terms of biological role, transcription factor that is the main target of insulin signaling and regulates metabolic homeostasis in response to oxidative stress. Binds to the insulin response element (IRE) with consensus sequence 5'-TT[G/A]TTTTG-3' and the related Daf-16 family binding element (DBE) with consensus sequence 5'-TT[G/A]TTTAC-3'. Activity suppressed by insulin. Main regulator of redox balance and osteoblast numbers and controls bone mass. Orchestrates the endocrine function of the skeleton in regulating glucose metabolism. Also acts as a key regulator of chondrogenic commitment of skeletal progenitor cells in response to lipid availability: when lipids levels are low, translocates to the nucleus and promotes expression of SOX9, which induces chondrogenic commitment and suppresses fatty acid oxidation. Acts synergistically with ATF4 to suppress osteocalcin/BGLAP activity, increasing glucose levels and triggering glucose intolerance and insulin insensitivity. Also suppresses the transcriptional activity of RUNX2, an upstream activator of osteocalcin/BGLAP. Acts as an inhibitor of glucose sensing in pancreatic beta cells by acting as a transcription repressor and suppressing expression of PDX1. In hepatocytes, promotes gluconeogenesis by acting together with PPARGC1A and CEBPA to activate the expression of genes such as IGFBP1, G6PC1 and PCK1. Also promotes gluconeogenesis by directly promoting expression of PPARGC1A and G6PC1. Important regulator of cell death acting downstream of CDK1, PKB/AKT1 and STK4/MST1. Promotes neural cell death. Mediates insulin action on adipose tissue. Regulates the expression of adipogenic genes such as PPARG during preadipocyte differentiation and, adipocyte size and adipose tissue-specific gene expression in response to excessive calorie intake. Regulates the transcriptional activity of GADD45A and repair of nitric oxide-damaged DNA in beta-cells. Required for the autophagic cell death induction in response to starvation or oxidative stress in a transcription-independent manner. Mediates the function of MLIP in cardiomyocytes hypertrophy and cardiac remodeling. Positive regulator of apoptosis in cardiac smooth muscle cells as a result of its transcriptional activation of pro-apoptotic genes. Regulates endothelial cell (EC) viability and apoptosis in a PPIA/CYPA-dependent manner via transcription of CCL2 and BCL2L11 which are involved in EC chemotaxis and apoptosis. This Bos taurus (Bovine) protein is Forkhead box protein O1 (FOXO1).